We begin with the raw amino-acid sequence, 515 residues long: Tabersonine 6,7-epoxidase isoform 2 (515 aa).

A helical transmembrane segment spans residues 1–21; that stretch reads MEFVVSPFAFLIFFFILLKMI. Residues N173, N259, and N352 are each glycosylated (N-linked (GlcNAc...) asparagine). C449 provides a ligand contact to heme.

Belongs to the cytochrome P450 family. The cofactor is heme. As to expression, mainly expressed in aerial organs, including stems, leaves and flowers.

Its subcellular location is the endoplasmic reticulum membrane. It carries out the reaction (-)-tabersonine + reduced [NADPH--hemoprotein reductase] + O2 = lochnericine + oxidized [NADPH--hemoprotein reductase] + H2O + H(+). It functions in the pathway alkaloid biosynthesis. Its function is as follows. Component of the monoterpenoid indole alkaloids (MIAs, e.g. echitovenine, tabersonine, lochnericine, 19-hydroxytabersonine and horhammericine) biosynthetic pathway; MIAs are used in cancer treatment and other medical applications. Cytochrome P450 catalyzing the conversion of tabersonine to lochnericine. This is Tabersonine 6,7-epoxidase isoform 2 from Catharanthus roseus (Madagascar periwinkle).